The sequence spans 294 residues: 33 kDa chaperonin (294 aa).

Cystine bridges form between cysteine 239–cysteine 241 and cysteine 272–cysteine 275.

The protein belongs to the HSP33 family. Post-translationally, under oxidizing conditions two disulfide bonds are formed involving the reactive cysteines. Under reducing conditions zinc is bound to the reactive cysteines and the protein is inactive.

The protein resides in the cytoplasm. Its function is as follows. Redox regulated molecular chaperone. Protects both thermally unfolding and oxidatively damaged proteins from irreversible aggregation. Plays an important role in the bacterial defense system toward oxidative stress. The protein is 33 kDa chaperonin of Listeria monocytogenes serovar 1/2a (strain ATCC BAA-679 / EGD-e).